The chain runs to 396 residues: Serine/threonine-protein kinase VRK1 (396 aa).

The Protein kinase domain maps to 37–317 (WKVGLPIGQG…LLDYTEKPLY (281 aa)). ATP is bound by residues 43–51 (IGQGGFGCI) and K71. K71 participates in a covalent cross-link: Glycyl lysine isopeptide (Lys-Gly) (interchain with G-Cter in SUMO2). The active-site Proton acceptor is D177. S342 is modified (phosphoserine; by PLK3). The interval 354-396 (ITKKRKKEIEESKEPGVEDTEWSNTQTEEAIQTRSRTRKRVQK) is disordered. T355 bears the Phosphothreonine; by autocatalysis mark. The span at 360-369 (KEIEESKEPG) shows a compositional bias: basic and acidic residues. Over residues 375–387 (WSNTQTEEAIQTR) the composition is skewed to polar residues. S376 is subject to Phosphoserine. T378 is modified (phosphothreonine). Residues 387–393 (RSRTRKR) form a required for interaction with the nucleosome region.

Belongs to the protein kinase superfamily. CK1 Ser/Thr protein kinase family. VRK subfamily. Interacts with HDAC1, KAT2B, SETDB1, KDM3A and KDM4A. Associates with the nucleosome through interactions with nucleosome DNA, histone H2A and histone H2B; the interaction with H2A and H2B is mediated by the nucleosome acidic patch, a cluster of negatively charged residues of H2A and H2B forming a cleft within the nucleosome core. In terms of assembly, (Microbial infection) Interacts with vaccinia protein B12; this interaction inhibits the repressive activity of the vaccinia virus B12 pseudokinase on viral replication factory formation. Post-translationally, autophosphorylated at various serine and threonine residues. Autophosphorylation does not impair its ability to phosphorylate p53/TP53. Phosphorylation by PLK3 leads to induction of Golgi fragmentation during mitosis. As to expression, widely expressed. Highly expressed in fetal liver, testis and thymus.

The protein localises to the nucleus. Its subcellular location is the cytoplasm. It is found in the cajal body. The catalysed reaction is L-seryl-[protein] + ATP = O-phospho-L-seryl-[protein] + ADP + H(+). It catalyses the reaction L-threonyl-[protein] + ATP = O-phospho-L-threonyl-[protein] + ADP + H(+). Its activity is regulated as follows. Active in presence of Mn(2+), Mg(2+) and Zn(2+), but is not functional with Ca(2+) or Cu(2+). Has a higher affinity for Mn(2+) than for Mg(2+). RAN inhibits its autophosphorylation and its ability to phosphorylate histone H3. Functionally, serine/threonine kinase involved in the regulation of key cellular processes including the cell cycle, nuclear condensation, transcription regulation, and DNA damage response. Controls chromatin organization and remodeling by mediating phosphorylation of histone H3 on 'Thr-4' and histone H2AX (H2aXT4ph). It also phosphorylates KAT5 in response to DNA damage, promoting KAT5 association with chromatin and histone acetyltransferase activity. Is involved in the regulation of cell cycle progression of neural progenitors, and is required for proper cortical neuronal migration. Is involved in neurite elongation and branching in motor neurons, and has an essential role in Cajal bodies assembly, acting through COIL phosphorylation and the control of coilin degradation. Involved in Golgi disassembly during the cell cycle: following phosphorylation by PLK3 during mitosis, it is required to induce Golgi fragmentation. Phosphorylates BANF1: disrupts its ability to bind DNA, reduces its binding to LEM domain-containing proteins and causes its relocalization from the nucleus to the cytoplasm. Phosphorylates TP53BP1 and p53/TP53 on 'Thr-18', preventing the interaction between p53/TP53 and MDM2. Phosphorylates ATF2 which activates its transcriptional activity. Phosphorylates JUN. The polypeptide is Serine/threonine-protein kinase VRK1 (Homo sapiens (Human)).